Consider the following 714-residue polypeptide: Polyribonucleotide nucleotidyltransferase (714 aa).

Mg(2+) is bound by residues Asp-484 and Asp-490. In terms of domain architecture, KH spans 551-610; the sequence is PRIMVINIAPEKVREVIGPGGKVINKIIDETGVKIDTEDDGKITVAGENTESAQRAIDMI. Residues 620–688 form the S1 motif domain; the sequence is GEKYLGRVTK…DQGKMTLSRK (69 aa). The interval 685–714 is disordered; that stretch reads LSRKALLPKPERKEKKNFDKKSEDQNSEDK. A compositionally biased stretch (basic and acidic residues) spans 693-714; the sequence is KPERKEKKNFDKKSEDQNSEDK.

It belongs to the polyribonucleotide nucleotidyltransferase family. Mg(2+) is required as a cofactor.

It localises to the cytoplasm. It catalyses the reaction RNA(n+1) + phosphate = RNA(n) + a ribonucleoside 5'-diphosphate. In terms of biological role, involved in mRNA degradation. Catalyzes the phosphorolysis of single-stranded polyribonucleotides processively in the 3'- to 5'-direction. The sequence is that of Polyribonucleotide nucleotidyltransferase from Finegoldia magna (strain ATCC 29328 / DSM 20472 / WAL 2508) (Peptostreptococcus magnus).